The following is an 85-amino-acid chain: Beta-toxin Ct6 (85 aa).

Positions 1–18 (MKTFVLALCLVLIGMVYA) are cleaved as a signal peptide. Residues 19–84 (KDGYLVSKHT…VYPLPNKSCG (66 aa)) enclose the LCN-type CS-alpha/beta domain. Cystine bridges form between C30/C83, C34/C59, C43/C64, and C47/C66. The residue at position 83 (C83) is a Cysteine amide.

It belongs to the long (4 C-C) scorpion toxin superfamily. Sodium channel inhibitor family. Beta subfamily. In terms of tissue distribution, expressed by the venom gland.

It localises to the secreted. Its function is as follows. Beta toxins bind voltage-independently at site-4 of sodium channels (Nav) and shift the voltage of activation toward more negative potentials thereby affecting sodium channel activation and promoting spontaneous and repetitive firing. This chain is Beta-toxin Ct6, found in Centruroides tecomanus (Scorpion).